Here is a 181-residue protein sequence, read N- to C-terminus: Small ribosomal subunit protein uS4 (181 aa).

Positions 104-172 (RRLQTIVYKK…SRPPVMSQQE (69 aa)) constitute an S4 RNA-binding domain.

The protein belongs to the universal ribosomal protein uS4 family. In terms of assembly, part of the 30S ribosomal subunit. Contacts protein S5. The interaction surface between S4 and S5 is involved in control of translational fidelity.

Its function is as follows. One of the primary rRNA binding proteins, it binds directly to 16S rRNA where it nucleates assembly of the body of the 30S subunit. In terms of biological role, with S5 and S12 plays an important role in translational accuracy. This chain is Small ribosomal subunit protein uS4, found in Saccharolobus solfataricus (strain ATCC 35092 / DSM 1617 / JCM 11322 / P2) (Sulfolobus solfataricus).